A 116-amino-acid polypeptide reads, in one-letter code: uncharacterized protein (116 aa).

A helical transmembrane segment spans residues 89–109; the sequence is VGFVILILLYILTNPNAIELI.

The protein belongs to the M.jannaschii MJ0023/MJ0349/MJ1072/MJ1074/MJ1107/MJECL16 family.

The protein localises to the membrane. This is an uncharacterized protein from Methanocaldococcus jannaschii (strain ATCC 43067 / DSM 2661 / JAL-1 / JCM 10045 / NBRC 100440) (Methanococcus jannaschii).